A 245-amino-acid polypeptide reads, in one-letter code: Homeobox protein Hox-A4a (245 aa).

Residues 34-99 (DYYERPKDPG…HGPRLTTESC (66 aa)) form a disordered region. Residues 35-51 (YYERPKDPGFPHHEEAS) show a composition bias toward basic and acidic residues. 2 stretches are compositionally biased toward polar residues: residues 53–73 (PRSNYQEQSYDYGNVSTNDLN) and 82–99 (QPQSVSQNHGPRLTTESC). The Antp-type hexapeptide motif lies at 126–131 (VYPWMK). Positions 147–206 (PKRSRTAYTRQQALELEKEFHFNRYLTRRRRVEIAHTMCLSERQVKIWFQNRRMKWKKDH) form a DNA-binding region, homeobox. The tract at residues 205-245 (DHKLPNTKIRSSSSAPSNHHVKTDATQQQQTLLPTPCSSNL) is disordered. Residues 212–221 (KIRSSSSAPS) are compositionally biased toward polar residues. Low complexity predominate over residues 230–245 (TQQQQTLLPTPCSSNL).

This sequence belongs to the Antp homeobox family. Deformed subfamily.

Its subcellular location is the nucleus. Its function is as follows. Sequence-specific transcription factor which is part of a developmental regulatory system that provides cells with specific positional identities on the anterior-posterior axis. This is Homeobox protein Hox-A4a (hoxa4a) from Danio rerio (Zebrafish).